Here is a 279-residue protein sequence, read N- to C-terminus: Proteasome subunit beta 2 (279 aa).

Residues 1–53 (MAAAFDPSGRFPDLFTSVGTSSFSAFLSKAAPELLPGRRPLPPGMATGLTPHA) constitute a propeptide, removed in mature form; by autocatalysis. Catalysis depends on threonine 54, which acts as the Nucleophile.

This sequence belongs to the peptidase T1B family. The 20S proteasome core is composed of 14 alpha and 14 beta subunits that assemble into four stacked heptameric rings, resulting in a barrel-shaped structure. The two inner rings, each composed of seven catalytic beta subunits, are sandwiched by two outer rings, each composed of seven alpha subunits. The catalytic chamber with the active sites is on the inside of the barrel. Has a gated structure, the ends of the cylinder being occluded by the N-termini of the alpha-subunits. Is capped by the proteasome-associated ATPase, ARC.

The protein localises to the cytoplasm. It catalyses the reaction Cleavage of peptide bonds with very broad specificity.. It participates in protein degradation; proteasomal Pup-dependent pathway. The formation of the proteasomal ATPase ARC-20S proteasome complex, likely via the docking of the C-termini of ARC into the intersubunit pockets in the alpha-rings, may trigger opening of the gate for substrate entry. Interconversion between the open-gate and close-gate conformations leads to a dynamic regulation of the 20S proteasome proteolysis activity. Functionally, component of the proteasome core, a large protease complex with broad specificity involved in protein degradation. This Salinispora tropica (strain ATCC BAA-916 / DSM 44818 / JCM 13857 / NBRC 105044 / CNB-440) protein is Proteasome subunit beta 2.